Here is a 257-residue protein sequence, read N- to C-terminus: Ribosome-inactivating protein charybdin (257 aa).

E167 is a catalytic residue. A disulfide bridge connects residues C217 and C254.

It belongs to the ribosome-inactivating protein family. Type 1 RIP subfamily.

The catalysed reaction is Endohydrolysis of the N-glycosidic bond at one specific adenosine on the 28S rRNA.. In terms of biological role, inhibits translation in rabbit reticulocytes. The chain is Ribosome-inactivating protein charybdin from Drimia maritima (Sea squill).